We begin with the raw amino-acid sequence, 600 residues long: Glutamine--fructose-6-phosphate aminotransferase [isomerizing] (600 aa).

The active-site Nucleophile; for GATase activity is the C2. A Glutamine amidotransferase type-2 domain is found at 2–217 (CGIVGFIGEQ…DKEIVIVTKE (216 aa)). SIS domains follow at residues 283 to 422 (IRNA…AKGE) and 452 to 590 (LAKQ…VDKP). Residue K595 is the For Fru-6P isomerization activity of the active site.

Homodimer.

Its subcellular location is the cytoplasm. It catalyses the reaction D-fructose 6-phosphate + L-glutamine = D-glucosamine 6-phosphate + L-glutamate. Functionally, catalyzes the first step in hexosamine metabolism, converting fructose-6P into glucosamine-6P using glutamine as a nitrogen source. The polypeptide is Glutamine--fructose-6-phosphate aminotransferase [isomerizing] (Bacillus cereus (strain ATCC 14579 / DSM 31 / CCUG 7414 / JCM 2152 / NBRC 15305 / NCIMB 9373 / NCTC 2599 / NRRL B-3711)).